The chain runs to 119 residues: Large ribosomal subunit protein bL20 (119 aa).

This sequence belongs to the bacterial ribosomal protein bL20 family.

In terms of biological role, binds directly to 23S ribosomal RNA and is necessary for the in vitro assembly process of the 50S ribosomal subunit. It is not involved in the protein synthesizing functions of that subunit. The protein is Large ribosomal subunit protein bL20 of Nitrosococcus oceani (strain ATCC 19707 / BCRC 17464 / JCM 30415 / NCIMB 11848 / C-107).